Here is a 186-residue protein sequence, read N- to C-terminus: uncharacterized protein (186 aa).

CBS domains are found at residues 10-69 (IMKK…KLPP) and 77-133 (ISSG…IIST).

This is an uncharacterized protein from Methanocaldococcus jannaschii (strain ATCC 43067 / DSM 2661 / JAL-1 / JCM 10045 / NBRC 100440) (Methanococcus jannaschii).